A 152-amino-acid polypeptide reads, in one-letter code: UPF0266 membrane protein YobD (152 aa).

3 consecutive transmembrane segments (helical) span residues L6–M26, V45–H65, and A67–I87.

This sequence belongs to the UPF0266 family.

The protein resides in the cell inner membrane. The protein is UPF0266 membrane protein YobD of Salmonella newport (strain SL254).